The chain runs to 72 residues: MSKVTTVFIGALVLLLLIENGFSCTNPGKKRCNAKCSTHCDCKDGPTHNFGAGPVQCKKCTYQFKGEAYCKQ.

The N-terminal stretch at 1–22 (MSKVTTVFIGALVLLLLIENGF) is a signal peptide. Cystine bridges form between C24–C40, C32–C57, C36–C60, and C42–C70.

As to expression, expressed in salivary glands.

It is found in the secreted. Probable neurotoxin. The chain is Holocyclotoxin-1 from Ixodes holocyclus (Australian paralysis tick).